A 523-amino-acid polypeptide reads, in one-letter code: 2-isopropylmalate synthase (523 aa).

The region spanning 5–267 (VIIFDTTLRD…HTNINHHEIW (263 aa)) is the Pyruvate carboxyltransferase domain. Mn(2+) is bound by residues Asp14, His202, His204, and Asn238. The tract at residues 392 to 523 (RLDYFSVQSG…HNKENNKEIV (132 aa)) is regulatory domain.

It belongs to the alpha-IPM synthase/homocitrate synthase family. LeuA type 1 subfamily. As to quaternary structure, homodimer. The cofactor is Mn(2+).

It is found in the cytoplasm. The enzyme catalyses 3-methyl-2-oxobutanoate + acetyl-CoA + H2O = (2S)-2-isopropylmalate + CoA + H(+). The protein operates within amino-acid biosynthesis; L-leucine biosynthesis; L-leucine from 3-methyl-2-oxobutanoate: step 1/4. Catalyzes the condensation of the acetyl group of acetyl-CoA with 3-methyl-2-oxobutanoate (2-ketoisovalerate) to form 3-carboxy-3-hydroxy-4-methylpentanoate (2-isopropylmalate). This chain is 2-isopropylmalate synthase, found in Salmonella arizonae (strain ATCC BAA-731 / CDC346-86 / RSK2980).